The primary structure comprises 251 residues: Chromobox protein homolog 7 (251 aa).

The region spanning Phe-11 to Tyr-69 is the Chromo domain. The segment at Glu-190 to Val-220 is disordered. The required for cellular lifespan extension stretch occupies residues Thr-223–Glu-236.

As to quaternary structure, component of a PRC1-like complex. Interacts with RING1 and RNF2/RING1B, but not with BMI1, EED or EZH2. Interacts with PCGF1, PCGF2, PCGF3, PCGF5 and PCGF6.

The protein resides in the nucleus. Functionally, component of a Polycomb group (PcG) multiprotein PRC1-like complex, a complex class required to maintain the transcriptionally repressive state of many genes, including Hox genes, throughout development. PcG PRC1 complex acts via chromatin remodeling and modification of histones; it mediates monoubiquitination of histone H2A 'Lys-119', rendering chromatin heritably changed in its expressibility. Promotes histone H3 trimethylation at 'Lys-9' (H3K9me3). Binds to trimethylated lysine residues in histones, and possibly also other proteins. Regulator of cellular lifespan by maintaining the repression of CDKN2A, but not by inducing telomerase activity. The protein is Chromobox protein homolog 7 (CBX7) of Homo sapiens (Human).